The primary structure comprises 706 residues: Glycine--tRNA ligase beta subunit (706 aa).

The protein belongs to the class-II aminoacyl-tRNA synthetase family. As to quaternary structure, tetramer of two alpha and two beta subunits.

It is found in the cytoplasm. The enzyme catalyses tRNA(Gly) + glycine + ATP = glycyl-tRNA(Gly) + AMP + diphosphate. The sequence is that of Glycine--tRNA ligase beta subunit from Hyphomonas neptunium (strain ATCC 15444).